Consider the following 366-residue polypeptide: MSVLAALAAIGVLAVLIAVHELGHFAAARLQGIHVTRFALGFGPPLLKYQGAETEYSIRAIPLGGYVAFPDDDPDSEIPADDPNLLKNRPILDRAIVISAGVIANLVFAYFLLIGQVSTIGFQNIQPGLVIPQVDSASAAQVAGMEPGDIVLSLQGNTLPGFPDATTQFIDIVRRSPSVPITVEVQRGEETKTLTITPTPDAEGKGKIGVALLPNVETKRASNPLEALTYSAEAFERIVKLTTQGFWQLISNFADNASQVAGPVKIVEYGANIARSDASNLFQFGALISINLAVINILPLPALDGGQLVFLLIEGLLGKPLPEKFQMGVMQTGLVLLLSLGVFLIVRDTLNLTFVQEFLPSFTGYE.

Position 20 (His-20) interacts with Zn(2+). Glu-21 is a catalytic residue. His-24 contributes to the Zn(2+) binding site. The next 3 helical transmembrane spans lie at 95–115 (AIVI…LLIG), 293–313 (AVIN…FLLI), and 325–345 (FQMG…VFLI). Positions 106-188 (LVFAYFLLIG…VPITVEVQRG (83 aa)) constitute a PDZ domain.

It belongs to the peptidase M50B family. Requires Zn(2+) as cofactor.

Its subcellular location is the cell inner membrane. The sequence is that of Putative zinc metalloprotease slr1821 from Synechocystis sp. (strain ATCC 27184 / PCC 6803 / Kazusa).